The following is a 637-amino-acid chain: Chaperone protein HtpG (637 aa).

Residues 1–335 (MQGTVNSERL…SSDLPLNISR (335 aa)) form an a; substrate-binding region. Positions 336 to 559 (ETLQNNKIIE…DGSMDIRMER (224 aa)) are b. The segment at 560–637 (FLREQKQLNY…RMNSVLSQIN (78 aa)) is c.

The protein belongs to the heat shock protein 90 family. Homodimer.

Its subcellular location is the cytoplasm. Functionally, molecular chaperone. Has ATPase activity. The chain is Chaperone protein HtpG from Ehrlichia ruminantium (strain Gardel).